The chain runs to 632 residues: Probable potassium transport system protein Kup (632 aa).

A run of 12 helical transmembrane segments spans residues 20–40 (LLVAAVGVVYGDIGTSPLYTL), 60–80 (ILSLILWSLLWVVSFKYVMFI), 111–131 (LMVICGLIGASLFYGDSMITP), 146–166 (FDGIDHWVVPISLVVLVALFL), 178–198 (LFGPIMVTWFVVLAALGVHGI), 216–236 (FFIVHPGMGVAILGAVVLALT), 257–277 (WFALVLPALVLNYFGQGAILL), 289–309 (LLAPGWALLPLVGLATMATVI), 347–367 (IYIAAVNWTLMVGVVLLVIGF), 379–399 (VAVTGTMLMTTILVSAVMLLL), 404–424 (PVLAVPILIGFLLVDGLFFAA), and 429–449 (IVQGGAFPVLAGGVLFLLMST).

This sequence belongs to the HAK/KUP transporter (TC 2.A.72) family.

The protein localises to the cell inner membrane. The enzyme catalyses K(+)(in) + H(+)(in) = K(+)(out) + H(+)(out). In terms of biological role, transport of potassium into the cell. Likely operates as a K(+):H(+) symporter. In Pseudomonas putida (strain W619), this protein is Probable potassium transport system protein Kup.